Here is a 332-residue protein sequence, read N- to C-terminus: L-lactate dehydrogenase A chain (332 aa).

Residues 29-57 (GMVG…MEDK) and R99 each bind NAD(+). The substrate site is built by R106, N138, and R169. N138 provides a ligand contact to NAD(+). The active-site Proton acceptor is the H193. Position 248 (T248) interacts with substrate.

It belongs to the LDH/MDH superfamily. LDH family. In terms of assembly, homotetramer.

The protein localises to the cytoplasm. The catalysed reaction is (S)-lactate + NAD(+) = pyruvate + NADH + H(+). It participates in fermentation; pyruvate fermentation to lactate; (S)-lactate from pyruvate: step 1/1. Functionally, interconverts simultaneously and stereospecifically pyruvate and lactate with concomitant interconversion of NADH and NAD(+). In Fundulus heteroclitus (Killifish), this protein is L-lactate dehydrogenase A chain (ldha).